The sequence spans 161 residues: MRCPSCNSLDTQVKDSRPTEDSSVIRRRRVCVTCNFRFTTFERVQLRELTVIKRNGRRVPFDRDKLMRSVQISLRKRSVDPERVEKMVSAIVRELESGGESEVSSEAIGEIVMEHLRDLDDVAYVRFASVYRNFREAKDFEAVLGELSAEDEAPRLAPVRK.

A compositionally biased stretch (polar residues) spans 1 to 11; that stretch reads MRCPSCNSLDT. The disordered stretch occupies residues 1-20; sequence MRCPSCNSLDTQVKDSRPTE. A zinc finger lies at 3-34; that stretch reads CPSCNSLDTQVKDSRPTEDSSVIRRRRVCVTC. The region spanning 49–139 is the ATP-cone domain; it reads LTVIKRNGRR…VYRNFREAKD (91 aa).

This sequence belongs to the NrdR family. The cofactor is Zn(2+).

Functionally, negatively regulates transcription of bacterial ribonucleotide reductase nrd genes and operons by binding to NrdR-boxes. The polypeptide is Transcriptional repressor NrdR (Bradyrhizobium sp. (strain BTAi1 / ATCC BAA-1182)).